The chain runs to 190 residues: MIKLHRQSYKNLQNISTASPSRVCKSARGKTSTAQKSHVNKGALSCDVHPHQAQELVSQQVELLHVLHRNDEMWRLAVQDTTKHIQSAEKKASRFSRRKQTAPPKTKSLRTPPACSTDKQNAPTVPASPSSYETLGCREQRPENPKDEATLPLTAHNIPKKAPSLLEKIGLKLKRTVEYIGASNCAFEDD.

The interval 88–156 (AEKKASRFSR…DEATLPLTAH (69 aa)) is disordered. Over residues 117–133 (TDKQNAPTVPASPSSYE) the composition is skewed to polar residues. A compositionally biased stretch (basic and acidic residues) spans 136-149 (GCREQRPENPKDEA).

The protein belongs to the vexin family. In terms of tissue distribution, expressed in differentiating progenitors in the developing central nervous system (CNS).

It localises to the cell membrane. The protein resides in the nucleus. Functionally, required for neurogenesis in the neural plate and retina. Cooperates with cell cycle inhibitor cdknx/p27(xic1) to enhance neurogenesis and increase the levels of the neuronal determination factor neurog2/X-ngngr-1. In Xenopus laevis (African clawed frog), this protein is Vexin.